A 182-amino-acid polypeptide reads, in one-letter code: LIM domain-containing protein C (182 aa).

LIM zinc-binding domains lie at Ser3–Gln63 and Thr110–Pro170.

It localises to the cell projection. It is found in the pseudopodium. Its subcellular location is the cytoplasm. The protein localises to the cell cortex. The protein resides in the cytoskeleton. Binds to F-actin and may modulate the chemotactic response during early development and contribute to the maintenance of the strength of the actin cytoskeleton. This Dictyostelium discoideum (Social amoeba) protein is LIM domain-containing protein C (limC).